The primary structure comprises 146 residues: NADH-ubiquinone oxidoreductase chain 6 (146 aa).

4 helical membrane-spanning segments follow: residues 10–30 (LTAI…ILFV), 41–61 (FVLM…MLFL), 75–95 (GTIT…LDIT), and 124–144 (AMLL…AMSI).

The protein belongs to the complex I subunit 6 family.

The protein localises to the mitochondrion membrane. The enzyme catalyses a ubiquinone + NADH + 5 H(+)(in) = a ubiquinol + NAD(+) + 4 H(+)(out). Its function is as follows. Core subunit of the mitochondrial membrane respiratory chain NADH dehydrogenase (Complex I) that is believed to belong to the minimal assembly required for catalysis. Complex I functions in the transfer of electrons from NADH to the respiratory chain. The immediate electron acceptor for the enzyme is believed to be ubiquinone. The chain is NADH-ubiquinone oxidoreductase chain 6 (ND6) from Debaryomyces hansenii (strain ATCC 36239 / CBS 767 / BCRC 21394 / JCM 1990 / NBRC 0083 / IGC 2968) (Yeast).